Here is a 210-residue protein sequence, read N- to C-terminus: MAIERYFIREAVKEMLIDEFLEKELRRAGYGGLDIKKTPLGTKVIIFAANPGYVIGRGGRRIRELTRILERQFGLENPQIDVQEIKNPYLNAKVQAVRIAQALERGIHFRRAAYSAMRAIMNNGARGVEIRLSGKLTGERAKSVRFYQGYLAKVGNPAETLVSKGYAQALLKLGVIGVKVAIMPPDARLPDEIEIVEKPAEEEVSTNEAE.

Residues 17–86 enclose the KH type-2 domain; that stretch reads IDEFLEKELR…NPQIDVQEIK (70 aa).

This sequence belongs to the universal ribosomal protein uS3 family. Part of the 30S ribosomal subunit.

Functionally, binds the lower part of the 30S subunit head. This is Small ribosomal subunit protein uS3 from Pyrococcus horikoshii (strain ATCC 700860 / DSM 12428 / JCM 9974 / NBRC 100139 / OT-3).